The chain runs to 919 residues: MDYKDTLLLPATDFPMRGDLPKNEPIRLKSWYEERKIYEKMKSKRAGAAKNFAIHDGPPYANGHLHIGHALNKILKDIITKTHYFFGENVRYVPGWDCHGLPIEQQVEVKLGDKKKELSKTQIRELCRAHAREFIDIQREEFKALGIIGDFENPYMTMKFEFEADIYRSLCEIAKKGLLIERSKPVYWSWAAKSALAEAEVEYEDKEDYSIYVAFELDSDALAKLGVKLAKAVIWTTTPWTLPANQAISLKPDEIYVLTSENLIFAKPLLESLVNLGLTKGEILKEFVSNELENTHAINPLNDRKSRFLLGDHVLMDGGTGLVHTAPGHGEDDYYICLRYGFKEILMPVDDGGLYDETLKAHSLLRADVVDSFVGMHIFKANEKIIELLGENLLHVSKFTHSYPFCWRTHKPVIYRATKQWFIAMDEPKLGGKTLREVARGELENVKFYPSVGIKRIGSMIENRPDWCISRQRDWGVPIAFFRRKDTKEPIFEPKILEHIAKIFEQKGADAWWDMSVEELLAPDSGFEAKNLEKVMDILDVWFDSGSTWHAVLNSKNYDAGSYPADMYLEGSDQHRGWFQSSLLVSTAINSHAPYKNILTHGFTVDENGQKMSKSKGNVVAPQDVAKSYGVEILRLWVGLSDYSSDLKISENILKQVSEQYRKIRNTIRFLLANVNDLETIGTDFGFLDQWILGRAKRVFDEASKCFRAYDFSKGFNLLLNFLSADLSGIYLDICKDRLYCDAKDSPRRRSAQSAMAIITKSLLPLIAPTLTYTVDEVMDYAPAIIKGDAKDAFDLVYEPINFDFDVEDELLFASREKFFELIDALKKDKKIKSTLELVLETTSSKILDYDSVERADIYMVSDVHRYSGNEGLGEFEIDGEKFKIVLSDASKCPRCWKFNAIIDGSTCERCSEVLNSVC.

A 'HIGH' region motif is present at residues 59–69 (PYANGHLHIGH). E570 serves as a coordination point for L-isoleucyl-5'-AMP. Residues 611 to 615 (KMSKS) carry the 'KMSKS' region motif. K614 contacts ATP. Zn(2+)-binding residues include C893, C896, C908, and C911.

This sequence belongs to the class-I aminoacyl-tRNA synthetase family. IleS type 1 subfamily. Monomer. Requires Zn(2+) as cofactor.

The protein resides in the cytoplasm. The enzyme catalyses tRNA(Ile) + L-isoleucine + ATP = L-isoleucyl-tRNA(Ile) + AMP + diphosphate. In terms of biological role, catalyzes the attachment of isoleucine to tRNA(Ile). As IleRS can inadvertently accommodate and process structurally similar amino acids such as valine, to avoid such errors it has two additional distinct tRNA(Ile)-dependent editing activities. One activity is designated as 'pretransfer' editing and involves the hydrolysis of activated Val-AMP. The other activity is designated 'posttransfer' editing and involves deacylation of mischarged Val-tRNA(Ile). This chain is Isoleucine--tRNA ligase, found in Campylobacter curvus (strain 525.92).